The sequence spans 744 residues: MPSGSMSGGVSGPTSPPHPTVPSRPLRPSRYVPVSAATAFLVGSTTLFFCFTCPWLSEQFSVAVPIYNGVMFMFVLANFCMATFMDPGIFPRAEEDEDKEDDFRAPLYKTVEIRGIQVRMKWCSTCRFYRPPRCSHCSVCDNCVEDFDHHCPWVNNCIGRRNYRYFFLFLLSLTAHIMGVFGFGLLFILYHTQQLDRVHSAVTMAVMCVAGLFFIPVAGLTGFHVVLVARGRTTNEQVTGKFRGGVNPFTNGCLRNVSHVLCSSQAPRYLGRKRKAQTVSVQPPFLRPQLTEAQLAAKVLDNGIQGDLHRSKSSLEMMESQSADAEPPPPPKPELRYPGLSRGPAGHSEESSLLNKAPPTPTMFKYRPTYSSPGKNHTALTHAYANQSSQQPGYRSEPSLDGREGGGAERSGAERTGGGPGGPPGSGIPGYSLGGRSYPSFSDPTVLAERASRSSSVRSTHNAPPSEATTSTSYKSLANQTPPQAARNGSLSYDSLLTPSESPDFESAAPEMSPGRPRTPVVGYSSPFLSAQIAHQREAELHQPVASSSALMASPQHAVFLRGSGSPPVPPERERERLLHDSQAQHHHHHHHHHHHHRPPRFSRPPLLSDSGPPQPSYPYRTRSTDTTHPPRSPHPPPLGKSLSYSSAAAAEMQYRLVRKASASVAGGGIQAPKDEIQMKSYSRTNGQPKPSSTPSSPTHPISVSTRPGQAHSSAGSSQSPAHKPGGGVKKVTGVGGTTYEISV.

The segment covering 1–11 (MPSGSMSGGVS) has biased composition (gly residues). Residues 1–25 (MPSGSMSGGVSGPTSPPHPTVPSRP) form a disordered region. Residues 1–30 (MPSGSMSGGVSGPTSPPHPTVPSRPLRPSR) lie on the Cytoplasmic side of the membrane. A helical transmembrane segment spans residues 31 to 51 (YVPVSAATAFLVGSTTLFFCF). The Extracellular portion of the chain corresponds to 52–61 (TCPWLSEQFS). The helical transmembrane segment at 62–82 (VAVPIYNGVMFMFVLANFCMA) threads the bilayer. Topologically, residues 83-167 (TFMDPGIFPR…IGRRNYRYFF (85 aa)) are cytoplasmic. The DHHC domain occupies 121–171 (KWCSTCRFYRPPRCSHCSVCDNCVEDFDHHCPWVNNCIGRRNYRYFFLFLL). C151 serves as the catalytic S-palmitoyl cysteine intermediate. Residues 168-188 (LFLLSLTAHIMGVFGFGLLFI) form a helical membrane-spanning segment. The Extracellular portion of the chain corresponds to 189–208 (LYHTQQLDRVHSAVTMAVMC). The chain crosses the membrane as a helical span at residues 209 to 229 (VAGLFFIPVAGLTGFHVVLVA). At 230-744 (RGRTTNEQVT…VGGTTYEISV (515 aa)) the chain is on the cytoplasmic side. 3 disordered regions span residues 314 to 523 (SLEM…PVVG), 556 to 645 (QHAV…SLSY), and 664 to 744 (SVAG…EISV). Residues 369–393 (TYSSPGKNHTALTHAYANQSSQQPG) show a composition bias toward polar residues. Residues 398 to 413 (PSLDGREGGGAERSGA) are compositionally biased toward basic and acidic residues. Positions 415-428 (RTGGGPGGPPGSGI) are enriched in gly residues. Positions 460–501 (THNAPPSEATTSTSYKSLANQTPPQAARNGSLSYDSLLTPSE) are enriched in polar residues. Positions 571–584 (PERERERLLHDSQA) are enriched in basic and acidic residues. The segment covering 585-601 (QHHHHHHHHHHHHRPPR) has biased composition (basic residues). Composition is skewed to low complexity over residues 621–630 (RTRSTDTTHP) and 689–723 (PKPSSTPSSPTHPISVSTRPGQAHSSAGSSQSPAH). Residues 725–737 (PGGGVKKVTGVGG) are compositionally biased toward gly residues.

Belongs to the DHHC palmitoyltransferase family. ERF2/ZDHHC9 subfamily.

Its subcellular location is the cell membrane. The catalysed reaction is L-cysteinyl-[protein] + hexadecanoyl-CoA = S-hexadecanoyl-L-cysteinyl-[protein] + CoA. Its function is as follows. Palmitoyltransferase that catalyzes the addition of palmitate onto various protein substrates and is involved in a variety of cellular processes. The protein is Palmitoyltransferase ZDHHC5-A of Danio rerio (Zebrafish).